The chain runs to 260 residues: Putative ATP-binding protein BAB2_1147 (260 aa).

The 224-residue stretch at isoleucine 5–isoleucine 228 folds into the ABC transporter domain. Residue glycine 37–serine 44 coordinates ATP.

This sequence belongs to the ABC transporter superfamily. As to quaternary structure, the complex is composed of two ATP-binding proteins (BAB2_1147), two transmembrane proteins (BAB2_1148) and a solute-binding protein (BAB2_1146).

The protein resides in the cell inner membrane. Functionally, probably part of an ABC transporter complex. Probably Responsible for energy coupling to the transport system. This is Putative ATP-binding protein BAB2_1147 from Brucella abortus (strain 2308).